A 902-amino-acid polypeptide reads, in one-letter code: Probable polyribonucleotide nucleotidyltransferase 1, chloroplastic (902 aa).

The N-terminal 66 residues, 1–66 (MLATPGALHH…RRRAAGARVR (66 aa)), are a transit peptide targeting the chloroplast. Residues 44 to 53 (VAASASTSRR) are compositionally biased toward low complexity. Residues 44 to 93 (VAASASTSRRGGARRRAAGARVRASVGEEAPPVVTEEASTSGGPTKFSTK) form a disordered region. A compositionally biased stretch (polar residues) spans 80-91 (EASTSGGPTKFS). Residues 693–753 (PLIHVMKVKP…SSLEKSKAII (61 aa)) enclose the KH domain. The 70-residue stretch at 763–832 (GEIYRNCEIK…DKGQLRLSSR (70 aa)) folds into the S1 motif domain. The tract at residues 833 to 902 (ALLPDANQES…ASQGSEMGTE (70 aa)) is disordered. The segment covering 839–850 (NQESSSKQQAGG) has biased composition (polar residues). Residues 852 to 862 (TREKAPQKDNL) show a composition bias toward basic and acidic residues. Residues 877-888 (EASTAENNATAS) are compositionally biased toward low complexity.

The protein belongs to the polyribonucleotide nucleotidyltransferase family.

It is found in the plastid. The protein localises to the chloroplast. The enzyme catalyses RNA(n+1) + phosphate = RNA(n) + a ribonucleoside 5'-diphosphate. Involved in the metabolism of all major classes of plastid RNAs. Required for efficient 3'-end processing of mRNAs and 3'-end maturation of rRNA transcripts, but is not sufficient to mediate their degradation. Mediates tRNA degradation. May function as a poly(A) mRNA 3'-5' degrading phosphorylase. This is Probable polyribonucleotide nucleotidyltransferase 1, chloroplastic (PNP1) from Oryza sativa subsp. japonica (Rice).